A 225-amino-acid polypeptide reads, in one-letter code: Heptaprenylglyceryl phosphate synthase (225 aa).

Lys-6 is a sn-glycerol 1-phosphate binding site. Residues Asp-8 and Thr-34 each coordinate Mg(2+). Residues 153 to 158 (YVEYSG), Gly-183, and 203 to 204 (GN) contribute to the sn-glycerol 1-phosphate site.

It belongs to the GGGP/HepGP synthase family. Group I subfamily. As to quaternary structure, homodimer. Requires Mg(2+) as cofactor.

It carries out the reaction sn-glycerol 1-phosphate + all-trans-heptaprenyl diphosphate = 3-heptaprenyl-sn-glycero-1-phosphate + diphosphate. Its pathway is membrane lipid metabolism; glycerophospholipid metabolism. In terms of biological role, prenyltransferase that catalyzes in vivo the transfer of the heptaprenyl moiety of heptaprenyl pyrophosphate (HepPP; 35 carbon atoms) to the C3 hydroxyl of sn-glycerol-1-phosphate (G1P), producing heptaprenylglyceryl phosphate (HepGP). This reaction is an ether-bond-formation step in the biosynthesis of archaea-type G1P-based membrane lipids found in Bacillales. This Listeria monocytogenes serotype 4b (strain F2365) protein is Heptaprenylglyceryl phosphate synthase.